Here is a 381-residue protein sequence, read N- to C-terminus: Dual specificity protein phosphatase 6 (381 aa).

Residues 30–148 (GNERLLLMDC…FQAEFALHCE (119 aa)) enclose the Rhodanese domain. Residues 176 to 203 (SSSDIESDLDRDPNSATDSDGSPLSNSQ) are disordered. The span at 189–203 (NSATDSDGSPLSNSQ) shows a compositional bias: polar residues. The Tyrosine-protein phosphatase domain occupies 206–349 (FPVEILPFLY…LLDFERTLGL (144 aa)). Catalysis depends on cysteine 293, which acts as the Phosphocysteine intermediate.

This sequence belongs to the protein-tyrosine phosphatase family. Non-receptor class dual specificity subfamily. Interacts with MAPK1/ERK2. Ubiquitinated by the SCF(FBXO31) complex, leading to its proteasomal degradation.

The protein localises to the cytoplasm. The catalysed reaction is O-phospho-L-tyrosyl-[protein] + H2O = L-tyrosyl-[protein] + phosphate. It carries out the reaction O-phospho-L-seryl-[protein] + H2O = L-seryl-[protein] + phosphate. It catalyses the reaction O-phospho-L-threonyl-[protein] + H2O = L-threonyl-[protein] + phosphate. Dual specificity protein phosphatase, which mediates dephosphorylation and inactivation of MAP kinases. Has a specificity for the ERK family. Plays an important role in alleviating acute postoperative pain. Necessary for the normal dephosphorylation of the long-lasting phosphorylated forms of spinal MAPK1/3 and MAP kinase p38 induced by peripheral surgery, which drives the resolution of acute postoperative allodynia. Also important for dephosphorylation of MAPK1/3 in local wound tissue, which further contributes to resolution of acute pain. The chain is Dual specificity protein phosphatase 6 (Dusp6) from Mus musculus (Mouse).